The sequence spans 303 residues: Methionyl-tRNA formyltransferase (303 aa).

(6S)-5,6,7,8-tetrahydrofolate is bound at residue 108–111 (SDLP).

The protein belongs to the Fmt family.

It catalyses the reaction L-methionyl-tRNA(fMet) + (6R)-10-formyltetrahydrofolate = N-formyl-L-methionyl-tRNA(fMet) + (6S)-5,6,7,8-tetrahydrofolate + H(+). Attaches a formyl group to the free amino group of methionyl-tRNA(fMet). The formyl group appears to play a dual role in the initiator identity of N-formylmethionyl-tRNA by promoting its recognition by IF2 and preventing the misappropriation of this tRNA by the elongation apparatus. The polypeptide is Methionyl-tRNA formyltransferase (Rickettsia africae (strain ESF-5)).